Consider the following 166-residue polypeptide: Ribosome maturation factor RimP (166 aa).

Belongs to the RimP family.

It localises to the cytoplasm. Required for maturation of 30S ribosomal subunits. The sequence is that of Ribosome maturation factor RimP from Rickettsia akari (strain Hartford).